The following is a 311-amino-acid chain: Haloalkane dehalogenase (311 aa).

The 119-residue stretch at 30–148 folds into the AB hydrolase-1 domain; sequence AIVFQHGNPS…WDDFPDEVAQ (119 aa). The Nucleophile role is filled by Asp107. Glu131 (proton donor) is an active-site residue. The active-site Proton acceptor is the His272.

This sequence belongs to the haloalkane dehalogenase family. Type 2 subfamily. In terms of assembly, monomer.

It catalyses the reaction 1-haloalkane + H2O = a halide anion + a primary alcohol + H(+). Catalyzes hydrolytic cleavage of carbon-halogen bonds in halogenated aliphatic compounds, leading to the formation of the corresponding primary alcohols, halide ions and protons. This Mycolicibacterium smegmatis (strain ATCC 700084 / mc(2)155) (Mycobacterium smegmatis) protein is Haloalkane dehalogenase.